A 255-amino-acid chain; its full sequence is 5'-nucleotidase SurE (255 aa).

A divalent metal cation is bound by residues D13, D14, S44, and N100.

The protein belongs to the SurE nucleotidase family. Requires a divalent metal cation as cofactor.

It is found in the cytoplasm. It carries out the reaction a ribonucleoside 5'-phosphate + H2O = a ribonucleoside + phosphate. Functionally, nucleotidase that shows phosphatase activity on nucleoside 5'-monophosphates. The protein is 5'-nucleotidase SurE of Bacteroides fragilis (strain ATCC 25285 / DSM 2151 / CCUG 4856 / JCM 11019 / LMG 10263 / NCTC 9343 / Onslow / VPI 2553 / EN-2).